A 568-amino-acid polypeptide reads, in one-letter code: Hexose transporter 1 (568 aa).

Residues 1–32 are Cytoplasmic-facing; sequence MATEEMREKSLKREAESLWDIPPESYASKACS. The helical transmembrane segment at 33-53 threads the bilayer; sequence CMGTAAQLVMVAVLGSFQFGF. Residues 54–86 lie on the Extracellular side of the membrane; it reads NLSALNTSKAFIILDFGWCKDENGGHYSDCDTG. Cysteine 72 and cysteine 83 are joined by a disulfide. A helical transmembrane segment spans residues 87–107; the sequence is LVYGSLINTAVFLGACVGCLL. At 108 to 119 the chain is on the cytoplasmic side; that stretch reads GGRLTDFGRRAS. A helical membrane pass occupies residues 120 to 140; sequence LIFTHCVCTLGCILSAAAEGF. Residues 141 to 142 are Extracellular-facing; that stretch reads PT. Residues 143–163 traverse the membrane as a helical segment; it reads LLIARLVVGVAVGMFTVCVPM. Topologically, residues 164 to 182 are cytoplasmic; it reads YLSEVTPDDRRGYFGTFHQ. Residue glutamine 182 coordinates alpha-D-glucose. Glutamine 182 is a beta-D-glucose binding site. Residues 183–203 traverse the membrane as a helical segment; sequence LFITLGIFFGTLLGLAFGNAP. The Extracellular portion of the chain corresponds to 204–220; the sequence is AGDEVYEVSTFQQAWWR. Residues 221 to 241 traverse the membrane as a helical segment; sequence VMLGLPAVVSLLAIWLLWFVF. Residues 242–306 lie on the Cytoplasmic side of the membrane; sequence PFETPQYMVE…KAIVHPTYRS (65 aa). The chain crosses the membrane as a helical span at residues 307 to 327; it reads VILLACLLSIMQQFTGINVLV. Glutamine 318, glutamine 319, and asparagine 324 together coordinate alpha-D-glucose. Residue glutamine 318 coordinates beta-D-glucose. Asparagine 324 contributes to the beta-D-glucose binding site. The Extracellular portion of the chain corresponds to 328-345; it reads ANSNNLYSSLKLPQDAVT. Residues 346–366 form a helical membrane-spanning segment; the sequence is GLTVGFTALNVFLTVITIPLV. Asparagine 355 contributes to the beta-D-glucose binding site. Residues 367–374 lie on the Cytoplasmic side of the membrane; it reads DRLGRRTL. The helical transmembrane segment at 375–395 threads the bilayer; it reads LLFSEAVMFVAMGIAFVANLV. The Extracellular segment spans residues 396-406; that stretch reads DQSNTAVQWVT. The chain crosses the membrane as a helical span at residues 407–427; sequence VACVYVFIVGFAVGYGPVLWI. Tryptophan 426 contributes to the alpha-D-glucose binding site. Topologically, residues 428 to 443 are cytoplasmic; the sequence is YIHEIFPPEIKQGAAS. A helical transmembrane segment spans residues 444 to 464; the sequence is LASALNWVATVAIVLPSDFLL. Topologically, residues 465–469 are extracellular; sequence KQGFS. The chain crosses the membrane as a helical span at residues 470–490; the sequence is VFVGICTVALAIIFVVTFIFV. Residues 491–568 lie on the Cytoplasmic side of the membrane; the sequence is KETKGLSIEE…DDLTKGTEVV (78 aa).

It belongs to the major facilitator superfamily. Sugar transporter (TC 2.A.1.1) family. As to quaternary structure, homodimer.

The protein localises to the cell membrane. It catalyses the reaction D-glucose(out) = D-glucose(in). The catalysed reaction is D-fructose(out) = D-fructose(in). It carries out the reaction D-galactose(in) = D-galactose(out). The enzyme catalyses D-mannose(out) = D-mannose(in). It catalyses the reaction D-glucosamine(out) = D-glucosamine(in). The catalysed reaction is D-xylose(out) = D-xylose(in). Its activity is regulated as follows. Inhibited by cytochalasin B. Functionally, sodium-independent facilitative hexose transporter. Can transport D-glucose and D-mannose with high affinity, and D-fructose and D-galactose with low affinity. Can transport D-xylose and D-glucosamine. The sequence is that of Hexose transporter 1 from Toxoplasma gondii.